A 313-amino-acid polypeptide reads, in one-letter code: Pyrimidine-specific ribonucleoside hydrolase RihB (313 aa).

D11 (proton acceptor) is an active-site residue. D11, D16, and V124 together coordinate Ca(2+). Substrate is bound by residues Q227 and H239. Ca(2+) is bound at residue D240.

The protein belongs to the IUNH family. RihB subfamily. In terms of assembly, homotetramer. Ca(2+) is required as a cofactor.

It catalyses the reaction a pyrimidine ribonucleoside + H2O = a pyrimidine nucleobase + D-ribose. In terms of biological role, hydrolyzes cytidine or uridine to ribose and cytosine or uracil, respectively. Has a clear preference for cytidine over uridine. Strictly specific for ribonucleosides. The chain is Pyrimidine-specific ribonucleoside hydrolase RihB from Escherichia coli (strain K12 / DH10B).